Reading from the N-terminus, the 133-residue chain is ATP synthase epsilon chain, chloroplastic (133 aa).

The protein belongs to the ATPase epsilon chain family. F-type ATPases have 2 components, CF(1) - the catalytic core - and CF(0) - the membrane proton channel. CF(1) has five subunits: alpha(3), beta(3), gamma(1), delta(1), epsilon(1). CF(0) has three main subunits: a, b and c.

It localises to the plastid. It is found in the chloroplast thylakoid membrane. Its function is as follows. Produces ATP from ADP in the presence of a proton gradient across the membrane. The polypeptide is ATP synthase epsilon chain, chloroplastic (Mesostigma viride (Green alga)).